The primary structure comprises 541 residues: 2-succinyl-5-enolpyruvyl-6-hydroxy-3-cyclohexene-1-carboxylate synthase (541 aa).

The protein belongs to the TPP enzyme family. MenD subfamily. In terms of assembly, homodimer. Mg(2+) serves as cofactor. Mn(2+) is required as a cofactor. Requires thiamine diphosphate as cofactor.

The enzyme catalyses isochorismate + 2-oxoglutarate + H(+) = 5-enolpyruvoyl-6-hydroxy-2-succinyl-cyclohex-3-ene-1-carboxylate + CO2. It participates in quinol/quinone metabolism; 1,4-dihydroxy-2-naphthoate biosynthesis; 1,4-dihydroxy-2-naphthoate from chorismate: step 2/7. It functions in the pathway quinol/quinone metabolism; menaquinone biosynthesis. Catalyzes the thiamine diphosphate-dependent decarboxylation of 2-oxoglutarate and the subsequent addition of the resulting succinic semialdehyde-thiamine pyrophosphate anion to isochorismate to yield 2-succinyl-5-enolpyruvyl-6-hydroxy-3-cyclohexene-1-carboxylate (SEPHCHC). The sequence is that of 2-succinyl-5-enolpyruvyl-6-hydroxy-3-cyclohexene-1-carboxylate synthase from Leuconostoc mesenteroides subsp. mesenteroides (strain ATCC 8293 / DSM 20343 / BCRC 11652 / CCM 1803 / JCM 6124 / NCDO 523 / NBRC 100496 / NCIMB 8023 / NCTC 12954 / NRRL B-1118 / 37Y).